The primary structure comprises 590 residues: 4-oxocyclohex-2-ene-1-carboxylate 5-dehydrogenase (590 aa).

Belongs to the FAD-dependent oxidoreductase 2 family. Forms multimers. It depends on FAD as a cofactor.

The catalysed reaction is 4-oxocyclohex-2-ene-1-carboxylate + NAD(+) = 4-oxocyclohexa-2,5-diene-1-carboxylate + NADH + H(+). Its function is as follows. Desaturase involved in a cyclohexanecarboxylate (CHCA) degradation pathway. Probably catalyzes the conversion of 4-oxocyclohexenecarboxylate to 4-oxocyclohex-2,5-dienecarboxylate, which is spontaneously isomerized to 4-hydroxybenzoate (4-HBA). This Sinomonas cyclohexanicum (Corynebacterium cyclohexanicum) protein is 4-oxocyclohex-2-ene-1-carboxylate 5-dehydrogenase.